Here is a 108-residue protein sequence, read N- to C-terminus: DIQMTQSTSSLSASLGDRVTISCRASQDISNYLNWYQQKPDGTVKLLIYYTSRLHSGVPSRFSGSGSGTDYSLTISNLEQEDIATYFCQQGYMLPRTFGGGTKLEIKR.

Residues 1–23 (DIQMTQSTSSLSASLGDRVTISC) form a framework-1 region. A disulfide bridge connects residues Cys-23 and Cys-88. Residues 24 to 34 (RASQDISNYLN) are complementarity-determining-1. The tract at residues 35 to 49 (WYQQKPDGTVKLLIY) is framework-2. Positions 50–56 (YTSRLHS) are complementarity-determining-2. A framework-3 region spans residues 57–88 (GVPSRFSGSGSGTDYSLTISNLEQEDIATYFC). A complementarity-determining-3 region spans residues 89–97 (QQGYMLPRT). Positions 98–108 (FGGGTKLEIKR) are framework-4.

This chain is Ig kappa chain V-V region HP 123E6, found in Mus musculus (Mouse).